The sequence spans 194 residues: Ribonuclease HII (194 aa).

An RNase H type-2 domain is found at 3 to 193; sequence ILTAGVDEAG…VRNLLAQQAL (191 aa). Positions 9, 10, and 101 each coordinate a divalent metal cation.

It belongs to the RNase HII family. Requires Mn(2+) as cofactor. It depends on Mg(2+) as a cofactor.

It localises to the cytoplasm. The enzyme catalyses Endonucleolytic cleavage to 5'-phosphomonoester.. Endonuclease that specifically degrades the RNA of RNA-DNA hybrids. This chain is Ribonuclease HII, found in Neisseria gonorrhoeae (strain ATCC 700825 / FA 1090).